A 411-amino-acid polypeptide reads, in one-letter code: 4-coumarate--CoA ligase (411 aa).

The protein belongs to the ATP-dependent AMP-binding enzyme family.

The enzyme catalyses (E)-4-coumarate + ATP + CoA = (E)-4-coumaroyl-CoA + AMP + diphosphate. Functionally, converts p-coumaric acid into p-coumaryl CoA. This is necessary for the activation of the photoactive yellow protein (PYP) chromophore. This is 4-coumarate--CoA ligase (pcl) from Cereibacter sphaeroides (strain ATCC 17023 / DSM 158 / JCM 6121 / CCUG 31486 / LMG 2827 / NBRC 12203 / NCIMB 8253 / ATH 2.4.1.) (Rhodobacter sphaeroides).